An 84-amino-acid polypeptide reads, in one-letter code: Acid stress protein IbaG (84 aa).

Belongs to the BolA/IbaG family.

Its function is as follows. Involved in cell resistance against acid stress. The chain is Acid stress protein IbaG from Escherichia coli O6:H1 (strain CFT073 / ATCC 700928 / UPEC).